Reading from the N-terminus, the 98-residue chain is uncharacterized protein (98 aa).

This is an uncharacterized protein from Frog virus 3 (isolate Goorha) (FV-3).